The primary structure comprises 361 residues: Peptide chain release factor 1 (361 aa).

Q237 carries the N5-methylglutamine modification. The span at 285-296 (DEKRRSAEESTR) shows a compositional bias: basic and acidic residues. The disordered stretch occupies residues 285–305 (DEKRRSAEESTRRNLVGSGDR).

Belongs to the prokaryotic/mitochondrial release factor family. Post-translationally, methylated by PrmC. Methylation increases the termination efficiency of RF1.

The protein resides in the cytoplasm. Functionally, peptide chain release factor 1 directs the termination of translation in response to the peptide chain termination codons UAG and UAA. This is Peptide chain release factor 1 from Shewanella sediminis (strain HAW-EB3).